The sequence spans 607 residues: MDNLSDTLKKLKITAVDKTEDSLEGCLDCLLQALAQNNTETSEKIQASGILQLFASLLTPQSSCKAKVANIIAEVAKNEFMRIPCVDAGLISPLVQLLNSKDQEVLLQTGRALGNICYDSHEGRSAVDQAGGAQIVIDHLRSLCSITDPANEKLLTVFCGMLMNYSNENDSLQAQLINMGVIPTLVKLLGIHCQNAALTEMCLVAFGNLAELESSKEQFASTNIAEELVKLFKKQIEHDKREMIFEVLAPLAENDAIKLQLVEAGLVECLLEIVQQKVDSDKEDDITELKTGSDLMVLLLLGDESMQKLFEGGKGSVFQRVLSWIPSNNHQLQLAGALAIANFARNDANCIHMVDNGIVEKLMDLLDRHVEDGNVTVQHAALSALRNLAIPVINKAKMLSAGVTEAVLKFLKSEMPPVQFKLLGTLRMLIDAQAEAAEQLGKNVKLVERLVEWCEAKDHAGVMGESNRLLSALIRHSKSKDVIKTIVQSGGIKHLVTMATSEHVIMQNEALVALALIAALELGTAEKDLESAKLVQILHRLLADERSAPEIKYNSMVLICALMGSECLHKEVQDLAFLDVVSKLRSHENKSVAQQASLTEQRLTVES.

Positions 4–13 (LSDTLKKLKI) match the Nuclear export signal (NES) motif. ARM repeat units follow at residues 89–131 (GLIS…DQAG) and 170–211 (DSLQ…NLAE). The interval 122–170 (EGRSAVDQAGGAQIVIDHLRSLCSITDPANEKLLTVFCGMLMNYSNEND) is prevents binding to prenylated RHOA. At Lys230 the chain carries N6-acetyllysine. The interval 239 to 255 (DKREMIFEVLAPLAEND) is interacts with polybasic regions in GTPases. ARM repeat units lie at residues 347 to 390 (DANC…NLAI), 391 to 431 (PVIN…MLID), and 479 to 519 (SKDV…LIAA). The interval 379–428 (HAALSALRNLAIPVINKAKMLSAGVTEAVLKFLKSEMPPVQFKLLGTLRM) is critical for catalytic activity.

In terms of assembly, interacts with RABL3. Interacts with RHOT1. As to quaternary structure, interacts with unprenylated RHOA; the interaction is direct. Interacts with RAP1A. Interacts with KRAS. Interacts with RAC1. Interacts with RAP1B. Preferentially interacts with unprenylated GTPases that will become geranylgeranylated. May also interact with prenylated GTPases. Interacts with prenylated RHOA; the interaction is direct and in a 1:1 stoichiometry. Interacts with RAP1A. Interacts with KRAS. Interacts with RAC1. Interacts with RAP1B. Preferentially interacts with prenylated GTPases. In terms of processing, forms covalent cross-links mediated by transglutaminase TGM2, between a glutamine and the epsilon-amino group of a lysine residue, forming homopolymers and heteropolymers.

The protein localises to the cytoplasm. The protein resides in the cytosol. Its subcellular location is the endoplasmic reticulum. It is found in the mitochondrion. It localises to the nucleus. Its function is as follows. Acts as a GEF (guanine nucleotide exchange factor) for the Rho family of small GTP-binding proteins (G proteins) that stimulates the dissociation of GDP to enable subsequent binding of GTP. Additionally, appears to chaperone the processing and/or trafficking of small GTPases containing a C-terminal polybasic region independently of GEF activity. Targets include RAP1A/RAP1B, RHOA, RHOB, RHOC, RAC1 and KRAS. Regulates mitochondrial dynamics by controlling RHOT function to promote mitochondrial fission during high calcium conditions. Able to promote the Ca(2+) release from the endoplasmic reticulum via both inositol trisphosphate (Ins3P) and ryanodine sensitive receptors leading to a enhanced mitochondrial Ca(2+) uptake. Acts as a GEF (guanine nucleotide exchange factor) for unprenylated RHOA. Chaperones the entry and passage of small GTPases through the prenylation pathway. Recognizes the last amino acid in the GTPase C-terminal CAAX motif with a preference for 'Leu' over 'Met', indicating involvement in the geranylgeranylation pathway. In terms of biological role, acts as a GEF (guanine nucleotide exchange factor) for prenylated RHOA. Acts as a GEF for RHOC. Chaperones the downstream trafficking and/or processing of small newly prenylated GTPases. Escorts RAC1 to the nucleus. This is Rap1 GTPase-GDP dissociation stimulator 1 from Homo sapiens (Human).